We begin with the raw amino-acid sequence, 348 residues long: Bombesin receptor-activated protein C6orf89 homolog (348 aa).

The Cytoplasmic segment spans residues 1 to 58; it reads MDLAANEISIYDKLSETVDLVRQTGHQCGMSEKAIEKFIRQLLEKNEPQRGPPQYPLL. The helical transmembrane segment at 59-79 threads the bilayer; that stretch reads IAMYKVLLTLGLILFTAYFVI. Residues 80-348 are Extracellular-facing; that stretch reads QPFSSLAPEP…ICDGTTLSEL (269 aa).

As to quaternary structure, homodimer. Interacts with BRS3. Interacts (via N-terminus) with SIN3B. Post-translationally, glycosylated.

It is found in the golgi apparatus membrane. Its subcellular location is the cytoplasm. Functionally, exhibits histone deacetylase (HDAC) enhancer properties. May play a role in cell cycle progression and wound repair of bronchial epithelial cells. In Rattus norvegicus (Rat), this protein is Bombesin receptor-activated protein C6orf89 homolog.